The sequence spans 803 residues: MRSLISVAVLSALPTAFSQANTSYTDYNVEANPDLFPLCLQHLNASFPDCASGPLSLTPVCDRSLSPKDRATALVSLFTFDELVNNTGNTGLGVSRLGLPNYQVWGEALHGVGRANFVESGNFSWATSFPMPITMMAALNKTLIHQIGTIVSTQLRAFSNAGLGGVDVYSPNINTFRHPVWGRGQETPGEDAFLTSVYGYEYITALQGGVDPETLKIIATAKHYAGYDIESWNNHSRLGNDMQITQQELSEYYTPPFIVASRDAKVRSVMCSYNAVNGVPSCANKFFLQTLLRDTFEFSEDGYVSGDCGAVYNVWNPHGYASNEAAASADSILAGTDIDCGTSYQWHSEDAFEDSLVSRSDIERGVIRLYSNLVQAGYFDGEDAPYRDITWDDVLSTDAWNIAYEAAVEGIVLLKNDETLPLSKDIKSVAVIGPWANVTEELQGNYFGPAPYLISPLTGFRDSGLDVHYALGTNLTSHSTSGFEEALTAAKQADAIIFAGGIDNTIEAEAMDRENITWPGNQLDLISKLSELGKPLVVLQMGGGQVDSSSLKDNDNVNALIWGGYPGQSGGHALADIITGKRAPAGRLVTTQYPAEYAEVFPAIDMNLRPNETSGNPGQTYMWYTGTPVYEFGHGLFYTTFEESTETTDAGSFNIQTVLTTPHSGYEHAQQKTLLNFTATVKNTGERESDYTALVYVNTTAGPAPYPKKWVVGFDRLGGLEPGDSQTLTVPVTVESVARTDEQGNRVLYPGSYELALNNERSVVVKFELKGEEAVILSWPEDTTSDFVSSIDGGLDRKQDVIA.

The N-terminal stretch at 1-18 is a signal peptide; the sequence is MRSLISVAVLSALPTAFS. Residues N21, N44, N85, N122, N140, and N234 are each glycosylated (N-linked (GlcNAc...) asparagine). Residue D307 is part of the active site. N-linked (GlcNAc...) asparagine glycans are attached at residues N437, N474, N515, N611, N676, and N698.

This sequence belongs to the glycosyl hydrolase 3 family.

The protein resides in the secreted. It catalyses the reaction Hydrolysis of (1-&gt;4)-beta-D-xylans, to remove successive D-xylose residues from the non-reducing termini.. The protein operates within glycan degradation; xylan degradation. In terms of biological role, xylan 1,4-beta-xylosidase involved in the hydrolysis of xylan, a major structural heterogeneous polysaccharide found in plant biomass representing the second most abundant polysaccharide in the biosphere, after cellulose. The sequence is that of Exo-1,4-beta-xylosidase xlnD (xlnD) from Emericella nidulans (strain FGSC A4 / ATCC 38163 / CBS 112.46 / NRRL 194 / M139) (Aspergillus nidulans).